The following is a 111-amino-acid chain: MAAKIKSGDLVKVIRGKDRGKEGTVKQVLSNDRLIVEGVQIVKKHVRATQQGQQAGIVSTEAPIHRSNVMVIDPETKQPTRVGITVKEEARDGKVKTVRVRVAKKSGKELA.

It belongs to the universal ribosomal protein uL24 family. As to quaternary structure, part of the 50S ribosomal subunit.

Functionally, one of two assembly initiator proteins, it binds directly to the 5'-end of the 23S rRNA, where it nucleates assembly of the 50S subunit. One of the proteins that surrounds the polypeptide exit tunnel on the outside of the subunit. In Bifidobacterium longum (strain DJO10A), this protein is Large ribosomal subunit protein uL24.